The primary structure comprises 437 residues: D-aminoacyl-tRNA deacylase (437 aa).

It belongs to the DtdA deacylase family. In terms of assembly, monomer. It depends on Zn(2+) as a cofactor.

The enzyme catalyses a D-aminoacyl-tRNA + H2O = a tRNA + a D-alpha-amino acid + H(+). The catalysed reaction is glycyl-tRNA(Ala) + H2O = tRNA(Ala) + glycine + H(+). Its function is as follows. D-aminoacyl-tRNA deacylase with broad substrate specificity. By recycling D-aminoacyl-tRNA to D-amino acids and free tRNA molecules, this enzyme counteracts the toxicity associated with the formation of D-aminoacyl-tRNA entities in vivo. This Methanoculleus marisnigri (strain ATCC 35101 / DSM 1498 / JR1) protein is D-aminoacyl-tRNA deacylase.